The chain runs to 1273 residues: DNA gyrase subunit A (1273 aa).

One can recognise a Topo IIA-type catalytic domain in the interval 42 to 931 (LPEVRDGLKP…VDGDVNDEDL (890 aa)). The active-site O-(5'-phospho-DNA)-tyrosine intermediate is the Tyr130. Residues 256 to 396 (LFGAFISGGF…VQQMLLEFGV (141 aa)) form the DOD-type homing endonuclease domain. Positions 958–964 (QKRGGKG) match the GyrA-box motif.

This sequence belongs to the type II topoisomerase GyrA/ParC subunit family. In terms of assembly, heterotetramer, composed of two GyrA and two GyrB chains. In the heterotetramer, GyrA contains the active site tyrosine that forms a transient covalent intermediate with the DNA, while GyrB binds cofactors catalyzes ATP hydrolysis. Post-translationally, this protein undergoes a protein self splicing that involves a post-translational excision of the intervening region (intein) followed by peptide ligation.

The protein resides in the cytoplasm. It carries out the reaction ATP-dependent breakage, passage and rejoining of double-stranded DNA.. DNA supercoiling is inhibited by fluoroquinolones; IC(50) 1 ug/ml for sitafloxacin. In terms of biological role, a type II topoisomerase that negatively supercoils closed circular double-stranded (ds) DNA in an ATP-dependent manner to modulate DNA topology and maintain chromosomes in an underwound state. Negative supercoiling favors strand separation, and DNA replication, transcription, recombination and repair, all of which involve strand separation. Also able to catalyze the interconversion of other topological isomers of dsDNA rings, including catenanes and knotted rings. Type II topoisomerases break and join 2 DNA strands simultaneously in an ATP-dependent manner. This is DNA gyrase subunit A from Mycobacterium leprae (strain TN).